A 370-amino-acid polypeptide reads, in one-letter code: Cytochrome b (370 aa).

4 consecutive transmembrane segments (helical) span residues Phe25 to Val45, Trp69 to Ile90, Trp105 to Leu125, and Phe170 to Leu190. His75 and His89 together coordinate heme b. Residues His174 and His188 each coordinate heme b. Position 193 (His193) interacts with a ubiquinone. The next 4 membrane-spanning stretches (helical) occupy residues Tyr218–Phe238, Leu280–His300, Leu312–Thr332, and Phe339–Pro358.

It belongs to the cytochrome b family. In terms of assembly, the cytochrome bc1 complex contains 3 respiratory subunits (MT-CYB, CYC1 and UQCRFS1), 2 core proteins (UQCRC1 and UQCRC2) and probably 6 low-molecular weight proteins. It depends on heme b as a cofactor.

The protein resides in the mitochondrion inner membrane. In terms of biological role, component of the ubiquinol-cytochrome c reductase complex (complex III or cytochrome b-c1 complex) that is part of the mitochondrial respiratory chain. The b-c1 complex mediates electron transfer from ubiquinol to cytochrome c. Contributes to the generation of a proton gradient across the mitochondrial membrane that is then used for ATP synthesis. The protein is Cytochrome b (MT-CYB) of Chilabothrus strigilatus strigilatus (New Providence boa constrictor).